The sequence spans 444 residues: MAAPTYYTITFGCQMNRADTERMAGILESLGYVATEDELQADLVLYNTCTIRDNAEQKVYSYLGIQAQRKRKNPAIKLIVAGCVAQQEGEKLLRRVPELDLVMGPQYVNRLGDLLAQVEAGNQVVATDPVEIPEDITKPRRDSQVTAWINVIYGCNERCTYCIVPRVRGQEQSRQPQAIRAEIEDVARAGYREVTLLGQNIDAYGRDLDPKTNLASLLRFVHSVEGIERIRFATSHPRYFTEELITTCAELPKVCEHFHIPFQAGSNEVLKRMRRGYTHERYRQIIQLIRQYMPEAAISADAIVGFPGETEAQFQETLQLVQDIGFDQVNTAAYSPRPGTPAAEWPDQVPEEEKSDRLQRLNRLVAEVAAARSARLLGQVQEVLVEGPNPKNPRQAMGRTRGNRLVFFEGDPEELQGSLVPVRITATRAFSLTGEAVTVRASGP.

In terms of domain architecture, MTTase N-terminal spans 4–120; the sequence is PTYYTITFGC…LGDLLAQVEA (117 aa). [4Fe-4S] cluster-binding residues include Cys-13, Cys-49, Cys-83, Cys-155, Cys-159, and Cys-162. The region spanning 141–372 is the Radical SAM core domain; sequence RDSQVTAWIN…RLVAEVAAAR (232 aa). Positions 374–438 constitute a TRAM domain; sequence ARLLGQVQEV…AFSLTGEAVT (65 aa).

This sequence belongs to the methylthiotransferase family. MiaB subfamily. As to quaternary structure, monomer. The cofactor is [4Fe-4S] cluster.

It is found in the cytoplasm. The enzyme catalyses N(6)-dimethylallyladenosine(37) in tRNA + (sulfur carrier)-SH + AH2 + 2 S-adenosyl-L-methionine = 2-methylsulfanyl-N(6)-dimethylallyladenosine(37) in tRNA + (sulfur carrier)-H + 5'-deoxyadenosine + L-methionine + A + S-adenosyl-L-homocysteine + 2 H(+). Catalyzes the methylthiolation of N6-(dimethylallyl)adenosine (i(6)A), leading to the formation of 2-methylthio-N6-(dimethylallyl)adenosine (ms(2)i(6)A) at position 37 in tRNAs that read codons beginning with uridine. In Synechococcus sp. (strain JA-2-3B'a(2-13)) (Cyanobacteria bacterium Yellowstone B-Prime), this protein is tRNA-2-methylthio-N(6)-dimethylallyladenosine synthase.